We begin with the raw amino-acid sequence, 509 residues long: Mitogen-activated protein kinase sma-5 (509 aa).

Residues 19 to 72 (DPITSMSPPQENRSPKAEYLNNFFNTNPTNGKSRGSQEAPRKPLGQTNLNVQGS) form a disordered region. Polar residues-rich tracts occupy residues 20–30 (PITSMSPPQEN) and 40–54 (NFFNTNPTNGKSRGS). The region spanning 105–411 (YEPTQNIGSG…IQDALLHPYI (307 aa)) is the Protein kinase domain. Residues 111-119 (IGSGAFGIV) and Lys-134 contribute to the ATP site. Asp-231 serves as the catalytic Proton acceptor. Positions 460–482 (YSELHSGDSTGSTSDMSTNTSGE) are disordered. Positions 466–481 (GDSTGSTSDMSTNTSG) are enriched in low complexity.

Belongs to the protein kinase superfamily. CMGC Ser/Thr protein kinase family. MAP kinase subfamily. Mg(2+) is required as a cofactor. As to expression, expressed in intestine with a stronger expression in the four most anterior cells, muscles, excretory cell, pharynx and, to a lesser extent, in hypodermis.

The catalysed reaction is L-seryl-[protein] + ATP = O-phospho-L-seryl-[protein] + ADP + H(+). The enzyme catalyses L-threonyl-[protein] + ATP = O-phospho-L-threonyl-[protein] + ADP + H(+). Serine/threonine-protein kinase involved in the postembryonic regulation of body size, mainly through control of cell growth. In particular, controls the volume of intestine, muscles and hypodermis. In addition, regulates growth, intestinal granule distribution, lifespan and number of offspring. The chain is Mitogen-activated protein kinase sma-5 from Caenorhabditis elegans.